We begin with the raw amino-acid sequence, 394 residues long: RHOMBOID-like protein 4 (394 aa).

A disordered region spans residues 1 to 51 (MGEKDSETAPIWGKTRERERSNNNNIQPMDLESSSSVSGQQRSLTQSRSSY). Residues 39–49 (GQQRSLTQSRS) are compositionally biased toward polar residues. 7 helical membrane-spanning segments follow: residues 64-84 (WFPW…VITM), 147-167 (WLHG…FIGI), 175-195 (FIRI…LSAL), 201-221 (ISVG…SEIF), 231-251 (VVTI…GVLP), 254-274 (DNFA…VLLI), and 300-320 (ILWT…LISL). The Nucleophile role is filled by S206. Residue H258 is the Charge relay system of the active site.

Belongs to the peptidase S54 family.

The protein resides in the membrane. It catalyses the reaction Cleaves type-1 transmembrane domains using a catalytic dyad composed of serine and histidine that are contributed by different transmembrane domains.. Probable rhomboid-type serine protease that catalyzes intramembrane proteolysis. This Arabidopsis thaliana (Mouse-ear cress) protein is RHOMBOID-like protein 4.